Reading from the N-terminus, the 116-residue chain is MAGLVKKTTGLVGLAVCDTPHERLTILYTKILDLLKHFPKHAAYRKYTEQITSEKLELVKLEPDVKKLENLLQGGEVEEVILQAEKELSLARKMLQWKPWEPLVEEPPANQWKWPI.

Ala-2 carries the post-translational modification N-acetylalanine. N6-acetyllysine is present on residues Lys-30, Lys-46, and Lys-60. Ser-89 bears the Phosphoserine mark. Lys-98 carries the N6-acetyllysine; alternate modification. N6-succinyllysine; alternate is present on Lys-98.

Belongs to the complex I NDUFA5 subunit family. As to quaternary structure, complex I is composed of 45 different subunits.

The protein resides in the mitochondrion inner membrane. Accessory subunit of the mitochondrial membrane respiratory chain NADH dehydrogenase (Complex I), that is believed not to be involved in catalysis. Complex I functions in the transfer of electrons from NADH to the respiratory chain. The immediate electron acceptor for the enzyme is believed to be ubiquinone. This chain is NADH dehydrogenase [ubiquinone] 1 alpha subcomplex subunit 5 (Ndufa5), found in Rattus norvegicus (Rat).